Consider the following 366-residue polypeptide: Peptide chain release factor 2 (366 aa).

At Gln246 the chain carries N5-methylglutamine.

This sequence belongs to the prokaryotic/mitochondrial release factor family. Methylated by PrmC. Methylation increases the termination efficiency of RF2.

Its subcellular location is the cytoplasm. Its function is as follows. Peptide chain release factor 2 directs the termination of translation in response to the peptide chain termination codons UGA and UAA. This is Peptide chain release factor 2 from Frankia casuarinae (strain DSM 45818 / CECT 9043 / HFP020203 / CcI3).